The following is a 159-amino-acid chain: Large ribosomal subunit protein mL50 (159 aa).

Belongs to the mitochondrion-specific ribosomal protein mL50 family. Component of the mitochondrial ribosome large subunit (39S) which comprises a 16S rRNA and about 50 distinct proteins.

It is found in the mitochondrion. In Bos taurus (Bovine), this protein is Large ribosomal subunit protein mL50 (MRPL50).